A 356-amino-acid polypeptide reads, in one-letter code: NADH-quinone oxidoreductase subunit H (356 aa).

9 helical membrane-spanning segments follow: residues 22-42 (GVVS…TAYL), 59-79 (PSLA…KLVF), 93-113 (FIIA…VIPI), 124-144 (IGGI…IIIA), 171-191 (MALS…IQIV), 198-218 (PIWL…SILA), 240-260 (VEYS…NMIL), 285-305 (IPGY…FLWI), and 321-341 (GLKV…TILV).

The protein belongs to the complex I subunit 1 family. As to quaternary structure, NDH-1 is composed of 14 different subunits. Subunits NuoA, H, J, K, L, M, N constitute the membrane sector of the complex.

Its subcellular location is the cell inner membrane. The catalysed reaction is a quinone + NADH + 5 H(+)(in) = a quinol + NAD(+) + 4 H(+)(out). NDH-1 shuttles electrons from NADH, via FMN and iron-sulfur (Fe-S) centers, to quinones in the respiratory chain. The immediate electron acceptor for the enzyme in this species is believed to be ubiquinone. Couples the redox reaction to proton translocation (for every two electrons transferred, four hydrogen ions are translocated across the cytoplasmic membrane), and thus conserves the redox energy in a proton gradient. This subunit may bind ubiquinone. The sequence is that of NADH-quinone oxidoreductase subunit H from Orientia tsutsugamushi (strain Boryong) (Rickettsia tsutsugamushi).